The primary structure comprises 213 residues: Hemolysin-3 homolog (213 aa).

Transmembrane regions (helical) follow at residues 11–31 (AITH…LIIF), 41–61 (IVSF…STLL), 75–95 (IIDH…FLLG), 103–123 (FTLL…KIFF), 127–147 (FILL…IAVK), 157–177 (GFSL…FYIW), and 185–205 (AIWH…VLFY).

This sequence belongs to the UPF0073 (Hly-III) family.

It is found in the cell membrane. This is Hemolysin-3 homolog (yplQ) from Bacillus subtilis (strain 168).